Consider the following 495-residue polypeptide: Bifunctional protein GlmU (495 aa).

A pyrophosphorylase region spans residues 1 to 241; the sequence is MPQQTAVVVL…AAKVTGVNDR (241 aa). UDP-N-acetyl-alpha-D-glucosamine is bound by residues 10–13, K24, Q81, and 86–87; these read LAAG and GT. Residue D112 coordinates Mg(2+). Positions 151, 166, 181, and 239 each coordinate UDP-N-acetyl-alpha-D-glucosamine. Residue N239 coordinates Mg(2+). The linker stretch occupies residues 242 to 262; that stretch reads VQLSIATRTMNRYILERHMRA. Positions 263-495 are N-acetyltransferase; the sequence is GVTIIDPAST…QATEQKDGEQ (233 aa). UDP-N-acetyl-alpha-D-glucosamine is bound by residues R344 and K362. The Proton acceptor role is filled by H374. Y377 and N388 together coordinate UDP-N-acetyl-alpha-D-glucosamine. Acetyl-CoA-binding positions include A391, 397–398, S416, and A434; that span reads NY. Residues 467-495 are disordered; sequence GTAAATAAAQALAADEKSSQATEQKDGEQ. Low complexity predominate over residues 468–479; the sequence is TAAATAAAQALA. Basic and acidic residues predominate over residues 480–495; that stretch reads ADEKSSQATEQKDGEQ.

In the N-terminal section; belongs to the N-acetylglucosamine-1-phosphate uridyltransferase family. The protein in the C-terminal section; belongs to the transferase hexapeptide repeat family. Homotrimer. The cofactor is Mg(2+).

It localises to the cytoplasm. The catalysed reaction is alpha-D-glucosamine 1-phosphate + acetyl-CoA = N-acetyl-alpha-D-glucosamine 1-phosphate + CoA + H(+). It catalyses the reaction N-acetyl-alpha-D-glucosamine 1-phosphate + UTP + H(+) = UDP-N-acetyl-alpha-D-glucosamine + diphosphate. The protein operates within nucleotide-sugar biosynthesis; UDP-N-acetyl-alpha-D-glucosamine biosynthesis; N-acetyl-alpha-D-glucosamine 1-phosphate from alpha-D-glucosamine 6-phosphate (route II): step 2/2. It functions in the pathway nucleotide-sugar biosynthesis; UDP-N-acetyl-alpha-D-glucosamine biosynthesis; UDP-N-acetyl-alpha-D-glucosamine from N-acetyl-alpha-D-glucosamine 1-phosphate: step 1/1. It participates in bacterial outer membrane biogenesis; LPS lipid A biosynthesis. In terms of biological role, catalyzes the last two sequential reactions in the de novo biosynthetic pathway for UDP-N-acetylglucosamine (UDP-GlcNAc). The C-terminal domain catalyzes the transfer of acetyl group from acetyl coenzyme A to glucosamine-1-phosphate (GlcN-1-P) to produce N-acetylglucosamine-1-phosphate (GlcNAc-1-P), which is converted into UDP-GlcNAc by the transfer of uridine 5-monophosphate (from uridine 5-triphosphate), a reaction catalyzed by the N-terminal domain. The polypeptide is Bifunctional protein GlmU (Nocardia farcinica (strain IFM 10152)).